A 679-amino-acid chain; its full sequence is Methionine--tRNA ligase (679 aa).

The 'HIGH' region motif lies at 12–22; it reads PYANGAIHLGH. Residues Cys-143, Cys-146, Cys-156, and Cys-159 each coordinate Zn(2+). The 'KMSKS' region motif lies at 328–332; that stretch reads KMSKS. ATP is bound at residue Lys-331. Positions 577–679 constitute a tRNA-binding domain; that stretch reads DFAKLDLRVA…EGIRPGMQVK (103 aa).

The protein belongs to the class-I aminoacyl-tRNA synthetase family. MetG type 1 subfamily. In terms of assembly, homodimer. Zn(2+) serves as cofactor.

It is found in the cytoplasm. It carries out the reaction tRNA(Met) + L-methionine + ATP = L-methionyl-tRNA(Met) + AMP + diphosphate. Its function is as follows. Is required not only for elongation of protein synthesis but also for the initiation of all mRNA translation through initiator tRNA(fMet) aminoacylation. The polypeptide is Methionine--tRNA ligase (Actinobacillus pleuropneumoniae serotype 5b (strain L20)).